The chain runs to 453 residues: Indoleamine 2,3-dioxygenase (453 aa).

Heme is bound at residue H331.

Belongs to the indoleamine 2,3-dioxygenase family. It depends on heme as a cofactor.

The enzyme catalyses D-tryptophan + O2 = N-formyl-D-kynurenine. The catalysed reaction is L-tryptophan + O2 = N-formyl-L-kynurenine. Its pathway is cofactor biosynthesis; NAD(+) biosynthesis. In terms of biological role, catalyzes the first step in tryptophan catabolism in order to supply de novo nicotinamide adenine dinucleotide (NAD(+)) via the kynurenine pathway. Plays a role in the cellular response to telomere uncapping. The polypeptide is Indoleamine 2,3-dioxygenase (BNA2) (Saccharomyces cerevisiae (strain ATCC 204508 / S288c) (Baker's yeast)).